Consider the following 719-residue polypeptide: Polyribonucleotide nucleotidyltransferase (719 aa).

Asp-507 and Asp-513 together coordinate Mg(2+). The region spanning 573–633 (PKLELFSVDP…EQIKAAKDYI (61 aa)) is the KH domain. Residues 658–719 (GQEFQGIVKK…NGKISVDLCE (62 aa)) enclose the S1 motif domain.

This sequence belongs to the polyribonucleotide nucleotidyltransferase family. Mg(2+) is required as a cofactor.

The protein resides in the cytoplasm. The catalysed reaction is RNA(n+1) + phosphate = RNA(n) + a ribonucleoside 5'-diphosphate. Functionally, involved in mRNA degradation. Catalyzes the phosphorolysis of single-stranded polyribonucleotides processively in the 3'- to 5'-direction. In Campylobacter jejuni subsp. jejuni serotype O:2 (strain ATCC 700819 / NCTC 11168), this protein is Polyribonucleotide nucleotidyltransferase.